Consider the following 1176-residue polypeptide: Histidine kinase 2 (1176 aa).

At 1–29 the chain is on the cytoplasmic side; it reads MSITCELLNLTSKKAKKSSSSDKKWLKKP. The helical transmembrane segment at 30–50 threads the bilayer; the sequence is LFFLILCGSLVIVLVMFLRLG. Residues 51-174 are Extracellular-facing; the sequence is RSQKEETDSC…LEQGLSSYLR (124 aa). A helical transmembrane segment spans residues 175-195; it reads NAWWCLILGVLVCHKIYVSHS. At 196–232 the chain is on the cytoplasmic side; it reads KARGERKEKVHLQEALAPKKQQQRAQTSSRGAGRWRK. A helical transmembrane segment spans residues 233–253; sequence NILLLGILGGVSFSVWWFWDT. Topologically, residues 254–536 are extracellular; that stretch reads NEEIIMKRRE…CRFKHKLPIP (283 aa). A CHASE domain is found at 302–526; the sequence is IPSAIDQRTF…GDPSRNHEMH (225 aa). The helical transmembrane segment at 537–557 threads the bilayer; it reads WTAITPSILVLVITFLVGYIL. Over 558 to 1176 the chain is Cytoplasmic; sequence YEAINRIATV…TAVARFFEPC (619 aa). Residues 594–867 enclose the Histidine kinase domain; the sequence is TVSHEIRTPM…TFSFTGVFGK (274 aa). At H597 the chain carries Phosphohistidine; by autocatalysis. 2 Response regulatory domains span residues 891-1013 and 1036-1173; these read RALV…QETL and QILV…ARFF. Residues D942 and D1086 each carry the 4-aspartylphosphate modification.

Self-interacts. Interacts with AHK3, AHP1, AHP2, AHP3, AHP5, ATAF2, AT2S3, BETAA-AD, CYP20-2, DRP1A, HIR1, HIR2, PI4KB1, PI4KG5 and At4g12060. Post-translationally, autophosphorylated predominantly on His residues. Activation probably requires a transfer of a phosphate group between a His in the transmitter domain and an Asp of the receiver domain. Expressed in roots, leaves and flowers, mostly in the vascular tissues. Present in seedlings.

The protein localises to the endoplasmic reticulum membrane. The catalysed reaction is ATP + protein L-histidine = ADP + protein N-phospho-L-histidine.. With respect to regulation, activated by cytokinins to initiate phosphorelay signaling. Cytokinins (CK) receptor related to bacterial two-component regulators. Functions as a histidine kinase and transmits the stress signal to a downstream MAPK cascade. This protein undergoes an ATP-dependent autophosphorylation at a conserved histidine residue in the kinase core, and a phosphoryl group is then transferred to a conserved aspartate residue in the receiver domain. In the presence of cytokinin, feeds phosphate to phosphorelay-integrating histidine phosphotransfer protein (HPt) and activates subsequent cascade. Involved in meristems establishment in seedlings. Redundant negative regulator of drought and salt stress responses and abscisic acid (ABA) signaling. Together with AHK3, plays a negative regulatory role in cold stress signaling via inhibition of ABA response, occurring independently of the cold acclimation pathway. Redundant positive regulator of cytokinin signaling that regulates many developmental processes including seed germination, cell division, seed size, chlorophyll retention during leaf senescence, root repression and shoot promotion. Involved in alkamides (e.g. N-isobutyl decanamide) and N-acylethanolamides (NAE) signaling that control meristematic activity and differentiation processes during plant development. Contributes to vascular bundle formation and secondary growth in a cytokinin-dependent manner, probably by promoting the maintenance of mitotic activity and/or identity of procambial cells. Together with AHK4, required for growth and reproduction promotion stimulated by the endophytic fungus Piriformospora indica in a trans-zeatin-dependent manner. Required by the cytokinin-dependent flower development regulation pathway. In Arabidopsis thaliana (Mouse-ear cress), this protein is Histidine kinase 2 (AHK2).